The following is a 336-amino-acid chain: Aspartate--ammonia ligase (336 aa).

It belongs to the class-II aminoacyl-tRNA synthetase family. AsnA subfamily.

The protein resides in the cytoplasm. The enzyme catalyses L-aspartate + NH4(+) + ATP = L-asparagine + AMP + diphosphate + H(+). It functions in the pathway amino-acid biosynthesis; L-asparagine biosynthesis; L-asparagine from L-aspartate (ammonia route): step 1/1. This chain is Aspartate--ammonia ligase, found in Limosilactobacillus reuteri (strain DSM 20016) (Lactobacillus reuteri).